The following is a 113-amino-acid chain: Protein ORF3 (113 aa).

2 hydrophobic regions span residues 1–21 and 32–52; these read MGSP…CLCC and AVVG…GLIL. The interaction with host HPX stretch occupies residues 27–67; it reads ASRLAAVVGGAAAVPAVVSGVTGLILSPSPSPIFIQPTPSP. The interaction with the capsid protein stretch occupies residues 47–71; it reads VTGLILSPSPSPIFIQPTPSPPMSF. Serine 70 is subject to Phosphoserine; by host. A homodimerization, and interaction with host AMBP/bikunin region spans residues 71 to 113; that stretch reads FHNPGLELALDSRPAPLXPLGVTSPSAPPLPPVVDLPQLGLRR. Residues 90-113 form a disordered region; the sequence is LGVTSPSAPPLPPVVDLPQLGLRR. The segment at 94–103 is interaction with host SRC, HCK, FYN, PIK3R3 and GRB2; it reads SPSAPPLPPV. The short motif at 95 to 98 is the PTAP/PSAP motif element; sequence PSAP.

Belongs to the hepevirus ORF3 protein family. In terms of assembly, forms homooligomers. Interacts with host SRC, HCK, FYN, PIK3R3 and GRB2 (via SH3 domain); binding does not activate the kinases. Interacts with host AMBP/bikunin and AMBP/alpha-1-microglobulin peptides. Interacts with host HPX/hemopexin. Interacts (when phosphorylated) with capsid protein ORF2. Interacts with host TSG101; this interaction plays a role in viral release from the host cell. Interacts with host SIRPA; this interaction down-regulates the phosphorylation of host IRF3. Palmitoylated in the N-terminus.

The protein resides in the host endoplasmic reticulum membrane. It is found in the host cytoplasm. Its subcellular location is the host cytoskeleton. The protein localises to the virion. It localises to the host cell membrane. Small multifunctional phosphoprotein involved in virion morphogenesis, egress and counteracting host innate immunity. Plays critical roles in the final steps of viral release by interacting with host TSG101, a member of the vacuolar protein-sorting pathway and using other cellular host proteins involved in vesicle formation pathway. Also acts as a viroporin and forms ion conductive pores allowing viral particle release. Impairs the generation of type I interferon by down-regulating host TLR3 and TLR7 as well as their downstream signaling pathways. Down-regulates the phosphorylation of host IRF3 via the interaction with host SIRP-alpha, thereby inhibiting IFN-I expression. Interacts with host microtubules. This chain is Protein ORF3, found in Hepatitis E virus genotype 3 (isolate Human/United States/US2) (HEV-3).